Here is a 456-residue protein sequence, read N- to C-terminus: tRNA-2-methylthio-N(6)-dimethylallyladenosine synthase (456 aa).

One can recognise an MTTase N-terminal domain in the interval 6–123 (KHVYIETYGC…LPNLIEEAQR (118 aa)). 6 residues coordinate [4Fe-4S] cluster: cysteine 15, cysteine 52, cysteine 86, cysteine 160, cysteine 164, and cysteine 167. The region spanning 146–380 (RAEGPTAYVS…RILEMAASIS (235 aa)) is the Radical SAM core domain. A TRAM domain is found at 381 to 444 (EAMVGTEQWV…KNSLRGRLIE (64 aa)).

It belongs to the methylthiotransferase family. MiaB subfamily. In terms of assembly, monomer. It depends on [4Fe-4S] cluster as a cofactor.

Its subcellular location is the cytoplasm. The enzyme catalyses N(6)-dimethylallyladenosine(37) in tRNA + (sulfur carrier)-SH + AH2 + 2 S-adenosyl-L-methionine = 2-methylsulfanyl-N(6)-dimethylallyladenosine(37) in tRNA + (sulfur carrier)-H + 5'-deoxyadenosine + L-methionine + A + S-adenosyl-L-homocysteine + 2 H(+). Functionally, catalyzes the methylthiolation of N6-(dimethylallyl)adenosine (i(6)A), leading to the formation of 2-methylthio-N6-(dimethylallyl)adenosine (ms(2)i(6)A) at position 37 in tRNAs that read codons beginning with uridine. This chain is tRNA-2-methylthio-N(6)-dimethylallyladenosine synthase, found in Dichelobacter nodosus (strain VCS1703A).